The primary structure comprises 512 residues: Choline-sulfatase (512 aa).

Ca(2+) contacts are provided by Asp14, Gln15, and Cys54. The Nucleophile role is filled by Cys54. Cys54 bears the 3-oxoalanine (Cys) mark. The active site involves His104. Ca(2+) contacts are provided by Asp296 and His297.

It belongs to the sulfatase family. Requires Ca(2+) as cofactor. In terms of processing, the conversion to 3-oxoalanine (also known as C-formylglycine, FGly), of a serine or cysteine residue in prokaryotes and of a cysteine residue in eukaryotes, is critical for catalytic activity.

It carries out the reaction choline sulfate + H2O = choline + sulfate + H(+). It participates in amine and polyamine biosynthesis; choline biosynthesis; choline from choline sulfate: step 1/1. Its function is as follows. Converts choline-O-sulfate into choline. The chain is Choline-sulfatase (betC) from Rhizobium meliloti (strain 1021) (Ensifer meliloti).